The following is a 108-amino-acid chain: UPF0145 protein LACR_1006 (108 aa).

Belongs to the UPF0145 family.

The protein is UPF0145 protein LACR_1006 of Lactococcus lactis subsp. cremoris (strain SK11).